The chain runs to 496 residues: uncharacterized protein (496 aa).

13 helical membrane-spanning segments follow: residues 5–25 (LTAL…GFLA), 45–65 (FGGL…YTFL), 77–97 (VAFF…FFLP), 127–147 (LVAI…LSGI), 161–181 (VKFV…FSGI), 193–213 (ILVW…HFNG), 239–259 (IPWF…WAHA), 278–298 (FLPL…IAFL), 325–345 (FAYA…AIGA), 374–394 (MVFV…TALV), 396–416 (LQLL…VSLF), 424–444 (ATVI…ITQS), and 450–470 (EGFW…PLFV).

This sequence belongs to the sodium:solute symporter (SSF) (TC 2.A.21) family.

It is found in the cell membrane. This is an uncharacterized protein from Bacillus subtilis (strain 168).